The following is a 40-amino-acid chain: Sauvagin (40 aa).

The residue at position 1 (Gln1) is a Pyrrolidone carboxylic acid. The residue at position 40 (Ile40) is an Isoleucine amide.

Belongs to the sauvagine/corticotropin-releasing factor/urotensin I family.

The protein localises to the secreted. Its function is as follows. Hypotensive and diuretic peptide. In Phyllomedusa sauvagei (Sauvage's leaf frog), this protein is Sauvagin.